We begin with the raw amino-acid sequence, 124 residues long: Small ribosomal subunit protein uS13 (124 aa).

The disordered stretch occupies residues 95–124 (GLPVRGQRTKTNARTRKGPKRTIAGKKKAR).

It belongs to the universal ribosomal protein uS13 family. Part of the 30S ribosomal subunit. Forms a loose heterodimer with protein S19. Forms two bridges to the 50S subunit in the 70S ribosome.

Located at the top of the head of the 30S subunit, it contacts several helices of the 16S rRNA. In the 70S ribosome it contacts the 23S rRNA (bridge B1a) and protein L5 of the 50S subunit (bridge B1b), connecting the 2 subunits; these bridges are implicated in subunit movement. Contacts the tRNAs in the A and P-sites. This chain is Small ribosomal subunit protein uS13, found in Mycobacteroides abscessus (strain ATCC 19977 / DSM 44196 / CCUG 20993 / CIP 104536 / JCM 13569 / NCTC 13031 / TMC 1543 / L948) (Mycobacterium abscessus).